The following is a 1134-amino-acid chain: DNA polymerase II large subunit (1134 aa).

It belongs to the archaeal DNA polymerase II family. In terms of assembly, heterodimer of a large subunit and a small subunit.

The catalysed reaction is DNA(n) + a 2'-deoxyribonucleoside 5'-triphosphate = DNA(n+1) + diphosphate. It carries out the reaction Exonucleolytic cleavage in the 3'- to 5'-direction to yield nucleoside 5'-phosphates.. Functionally, possesses two activities: a DNA synthesis (polymerase) and an exonucleolytic activity that degrades single-stranded DNA in the 3'- to 5'-direction. Has a template-primer preference which is characteristic of a replicative DNA polymerase. This chain is DNA polymerase II large subunit, found in Methanocella arvoryzae (strain DSM 22066 / NBRC 105507 / MRE50).